The chain runs to 347 residues: GMP reductase (347 aa).

Residue 108–131 participates in NADP(+) binding; it reads TDFIKLSEILAKSEDLNFICIDIA. K(+) contacts are provided by glycine 181 and glycine 183. The Thioimidate intermediate role is filled by cysteine 186. 216 to 239 provides a ligand contact to NADP(+); it reads IIGDGGCSCAGDVAKAFGGGADFV.

This sequence belongs to the IMPDH/GMPR family. GuaC type 1 subfamily. As to quaternary structure, homotetramer.

It carries out the reaction IMP + NH4(+) + NADP(+) = GMP + NADPH + 2 H(+). Catalyzes the irreversible NADPH-dependent deamination of GMP to IMP. It functions in the conversion of nucleobase, nucleoside and nucleotide derivatives of G to A nucleotides, and in maintaining the intracellular balance of A and G nucleotides. This Shewanella pealeana (strain ATCC 700345 / ANG-SQ1) protein is GMP reductase.